A 376-amino-acid chain; its full sequence is 26S proteasome non-ATPase regulatory subunit 4 (376 aa).

The region spanning 5–188 is the VWFA domain; sequence STMVCVDNSE…LADALISSPI (184 aa). Lys122 is covalently cross-linked (Glycyl lysine isopeptide (Lys-Gly) (interchain with G-Cter in SUMO2)). The segment at 197 to 262 is interaction with UBQLN1; it reads LGLGASDFEF…TEDSDDALLK (66 aa). The 20-residue stretch at 211–230 folds into the UIM 1 domain; sequence SADPELALALRVSMEEQRQR. Positions 224-237 are enriched in basic and acidic residues; the sequence is MEEQRQRQEEEARR. Residues 224–257 are disordered; it reads MEEQRQRQEEEARRAAAASAAEAGIATPGTEDSD. Phosphothreonine is present on residues Thr250 and Thr253. Phosphoserine is present on residues Ser256 and Ala259. Positions 282–301 constitute a UIM 2 domain; the sequence is TEEEQIAYAMQMSLQGTEFS. The segment at 355–376 is disordered; sequence MGALASQATKDGKNDKKEEEKK. The residue at position 360 (Ser360) is a Phosphoserine. A compositionally biased stretch (basic and acidic residues) spans 364 to 376; it reads KDGKNDKKEEEKK.

Belongs to the proteasome subunit S5A family. As to quaternary structure, component of the 19S proteasome regulatory particle complex. The 26S proteasome consists of a 20S core particle (CP) and two 19S regulatory subunits (RP). The regulatory particle is made of a lid composed of 9 subunits, a base containing 6 ATPases and few additional components including PSMD4. Interacts with NUB1. Interacts with SQSTM1. Interacts with UBQLN4. Interacts with UBE3A. Interacts with UBQLN1 (via ubiquitin-like domain). Interacts with DDI2. In terms of tissue distribution, isoform Rpn10A is ubiquitous whereas isoform Rpn10E is mostly expressed in the embryonic brain.

Functionally, component of the 26S proteasome, a multiprotein complex involved in the ATP-dependent degradation of ubiquitinated proteins. This complex plays a key role in the maintenance of protein homeostasis by removing misfolded or damaged proteins, which could impair cellular functions, and by removing proteins whose functions are no longer required. Therefore, the proteasome participates in numerous cellular processes, including cell cycle progression, apoptosis, or DNA damage repair. PSMD4 acts as an ubiquitin receptor subunit through ubiquitin-interacting motifs and selects ubiquitin-conjugates for destruction. Displays a preferred selectivity for longer polyubiquitin chains. This chain is 26S proteasome non-ATPase regulatory subunit 4 (Psmd4), found in Mus musculus (Mouse).